The chain runs to 285 residues: Tropomyosin alpha-3 chain (285 aa).

Positions 1–285 (MMEAIKKKMQ…DHALNDMTSI (285 aa)) form a coiled coil. The residue at position 2 (methionine 2) is an N-acetylmethionine. N-acetylalanine is present on methionine 2. Over residues 16–41 (KENALDRAEQAEAEQKQAEERSKQLE) the composition is skewed to basic and acidic residues. The disordered stretch occupies residues 16–44 (KENALDRAEQAEAEQKQAEERSKQLEDEL). At threonine 54 the chain carries Phosphothreonine. Phosphoserine is present on residues serine 62 and serine 88. Residue threonine 109 is modified to Phosphothreonine. N6-acetyllysine occurs at positions 125 and 177. At serine 207 the chain carries Phosphoserine. At tyrosine 215 the chain carries N6-acetyllysine. Serine 216 is modified (phosphoserine). Phosphothreonine is present on threonine 253. Tyrosine 262 carries the post-translational modification Phosphotyrosine. Serine 272 is subject to Phosphoserine. Threonine 283 carries the post-translational modification Phosphothreonine. Serine 284 carries the phosphoserine modification.

This sequence belongs to the tropomyosin family. In terms of assembly, homodimer. Heterodimer of an alpha (TPM1, TPM3 or TPM4) and a beta (TPM2) chain. Interacts with TMOD1. Interacts with TNNT1.

The protein resides in the cytoplasm. The protein localises to the cytoskeleton. Functionally, binds to actin filaments in muscle and non-muscle cells. Plays a central role, in association with the troponin complex, in the calcium dependent regulation of vertebrate striated muscle contraction. Smooth muscle contraction is regulated by interaction with caldesmon. In non-muscle cells is implicated in stabilizing cytoskeleton actin filaments. The sequence is that of Tropomyosin alpha-3 chain (TPM3) from Homo sapiens (Human).